Here is an 826-residue protein sequence, read N- to C-terminus: Zinc phosphodiesterase ELAC protein 2 (826 aa).

The transit peptide at 1 to 16 (MWALCSLLRSAAGRTM) directs the protein to the mitochondrion. The segment covering 15 to 24 (TMSQGRTISQ) has biased composition (polar residues). Disordered regions lie at residues 15–51 (TMSQGRTISQAPARRERPRKDPLRHLRTREKRGPSGC) and 189–231 (QRRG…VSQR). A compositionally biased stretch (basic and acidic residues) spans 27–38 (ARRERPRKDPLR). Phosphoserine occurs at positions 199, 208, 212, 229, 618, and 736. Residues 208–224 (SPERSSDSESNENEPHL) are compositionally biased toward basic and acidic residues. The disordered stretch occupies residues 798–826 (ELAGGLEDGEPQQKRAHTEEPQAKKVRAQ). Basic and acidic residues predominate over residues 808–820 (PQQKRAHTEEPQA).

This sequence belongs to the RNase Z family. In terms of assembly, homodimer. Interacts with PTCD1. It depends on Zn(2+) as a cofactor.

It localises to the mitochondrion. It is found in the mitochondrion matrix. The protein resides in the mitochondrion nucleoid. The protein localises to the nucleus. It carries out the reaction Endonucleolytic cleavage of RNA, removing extra 3' nucleotides from tRNA precursor, generating 3' termini of tRNAs. A 3'-hydroxy group is left at the tRNA terminus and a 5'-phosphoryl group is left at the trailer molecule.. Zinc phosphodiesterase, which displays mitochondrial tRNA 3'-processing endonuclease activity. Involved in tRNA maturation, by removing a 3'-trailer from precursor tRNA. Associates with mitochondrial DNA complexes at the nucleoids to initiate RNA processing and ribosome assembly. The protein is Zinc phosphodiesterase ELAC protein 2 (ELAC2) of Gorilla gorilla gorilla (Western lowland gorilla).